A 543-amino-acid polypeptide reads, in one-letter code: Biotinidase (543 aa).

The N-terminal stretch at 1–41 (MAHAHIQGGRRAKSRFVVCIMSGARSKLALFLCGCYVVALG) is a signal peptide. The region spanning 72-351 (NPLALISRQE…VGLIGAENAT (280 aa)) is the CN hydrolase domain. Glutamate 112 serves as the catalytic Proton acceptor. A glycan (N-linked (GlcNAc...) asparagine) is linked at asparagine 119. Asparagine 150 carries an N-linked (GlcNAc...) (complex) asparagine glycan. The N-linked (GlcNAc...) asparagine glycan is linked to asparagine 203. Lysine 212 serves as the catalytic Proton donor. The active-site Nucleophile is the cysteine 245. Residues asparagine 349, asparagine 402, and asparagine 489 are each glycosylated (N-linked (GlcNAc...) asparagine).

Belongs to the carbon-nitrogen hydrolase superfamily. BTD/VNN family.

Its subcellular location is the secreted. The protein resides in the extracellular space. The catalysed reaction is biocytin + H2O = biotin + L-lysine. It catalyses the reaction biotin amide + H2O = biotin + NH4(+). Functionally, catalytic release of biotin from biocytin, the product of biotin-dependent carboxylases degradation. In Homo sapiens (Human), this protein is Biotinidase.